We begin with the raw amino-acid sequence, 267 residues long: Diphthine--ammonia ligase (267 aa).

The residue at position 97 (Y97) is a Phosphotyrosine.

This sequence belongs to the Diphthine--ammonia ligase family.

The enzyme catalyses diphthine-[translation elongation factor 2] + NH4(+) + ATP = diphthamide-[translation elongation factor 2] + AMP + diphosphate + H(+). Its pathway is protein modification; peptidyl-diphthamide biosynthesis. In terms of biological role, amidase that catalyzes the last step of diphthamide biosynthesis using ammonium and ATP. Diphthamide biosynthesis consists in the conversion of an L-histidine residue in the translation elongation factor 2 (EEF2) to diphthamide. The chain is Diphthine--ammonia ligase (Dph6) from Mus musculus (Mouse).